Reading from the N-terminus, the 534-residue chain is MERLADRVILVWGFKRSLLAIGAGAFAVLALPPFGFFAAMFLSFTLLVWLIDGAAASPESGLIGRLWPAFAVGWLFGFGYFVAGLWWLGHALLVDSEEFAWALPLAILGLPACLAIFYGLAVALARIFWSDGMGRIAALAAGFGLMEWLRSVILTGFPWNAIGYGLMPVPLMMQSAHVIGAMGVTALAVFVFSAPALFGTRQGARTGVALAVLLFAAHLGYGAYALYLAPRPAPLPEDKRPVVRLVQPDIDQAAKMDNDADRNAIFETHLKLSAEAPRNGGRKPNIIVWPETSIPFILTDNQDALTRIADTLDDDQILIAGAVRAEEMGPGTPVRYYNSIYVIDGRGQIIAASDKVHLVPFGEYLPLEELLTELGIQNVVEVPGGFSAAASRHLLALPGGLNLYPLICYEIIFPDEMTGDIKDANALLNLTNDAWFGMTPGPYQHFLQARVRAVETGLPLIRDANSGISALVNAHGEIIAGLDLGETGFIDATVDSLSEGFGSTYPRQTYFWLTEALLILIALISREGFIFGLN.

Helical transmembrane passes span 8-28 (VILV…AFAV), 31-51 (LPPF…VWLI), 69-89 (AFAV…WWLG), 105-125 (LAIL…VALA), 127-147 (IFWS…GLME), 178-198 (VIGA…PALF), and 208-228 (VALA…ALYL). The 251-residue stretch at 246 to 496 (VQPDIDQAAK…TGFIDATVDS (251 aa)) folds into the CN hydrolase domain. Residue glutamate 291 is the Proton acceptor of the active site. Lysine 355 is an active-site residue. The active-site Nucleophile is cysteine 408. A helical transmembrane segment spans residues 511 to 531 (FWLTEALLILIALISREGFIF).

The protein belongs to the CN hydrolase family. Apolipoprotein N-acyltransferase subfamily.

It is found in the cell inner membrane. It carries out the reaction N-terminal S-1,2-diacyl-sn-glyceryl-L-cysteinyl-[lipoprotein] + a glycerophospholipid = N-acyl-S-1,2-diacyl-sn-glyceryl-L-cysteinyl-[lipoprotein] + a 2-acyl-sn-glycero-3-phospholipid + H(+). The protein operates within protein modification; lipoprotein biosynthesis (N-acyl transfer). Catalyzes the phospholipid dependent N-acylation of the N-terminal cysteine of apolipoprotein, the last step in lipoprotein maturation. This chain is Apolipoprotein N-acyltransferase, found in Rhizobium etli (strain CIAT 652).